Consider the following 435-residue polypeptide: D-amino acid dehydrogenase (435 aa).

An FAD-binding site is contributed by 3–17 (VLILGSGVIGTTSAW).

It belongs to the DadA oxidoreductase family. Requires FAD as cofactor.

The enzyme catalyses a D-alpha-amino acid + A + H2O = a 2-oxocarboxylate + AH2 + NH4(+). It functions in the pathway amino-acid degradation; D-alanine degradation; NH(3) and pyruvate from D-alanine: step 1/1. In terms of biological role, oxidative deamination of D-amino acids. This is D-amino acid dehydrogenase from Xylella fastidiosa (strain M23).